Consider the following 382-residue polypeptide: Protein MSN1 (382 aa).

The interval 12-26 is leucine-zipper; sequence LNENEAILTNRVAEL. Composition is skewed to polar residues over residues 104-114 and 122-138; these read TLDPQGFTDGT and NYTS…HPQN. Disordered regions lie at residues 104 to 138 and 155 to 260; these read TLDP…HPQN and NSQE…EEEQ. Residues 162 to 180 show a composition bias toward low complexity; sequence SQQQTNSSNSISQENNSTN. 2 stretches are compositionally biased toward polar residues: residues 181–198 and 207–221; these read PSVD…SNLV and NPPN…GLYI. Positions 222–231 are enriched in low complexity; sequence SSNSSQSRQS. The segment covering 232-253 has biased composition (polar residues); the sequence is PNLQKVSPNHENAVESNAQESV. Residues 266–271 carry the Nuclear localization signal motif; the sequence is GLKRKR.

The protein resides in the nucleus. May function as a transcriptional activator. Increased dosage of MSN1 restores invertase expression in yeast mutants defective in the SNF1 protein kinase, and msn1 disruption reduced derepression of invertase in the wild-type. May affect SUC2 expression. Expression of MSN1 enhances growth in iron-limiting conditions. In Saccharomyces cerevisiae (strain ATCC 204508 / S288c) (Baker's yeast), this protein is Protein MSN1 (MSN1).